Reading from the N-terminus, the 364-residue chain is tRNA 2-selenouridine synthase (364 aa).

One can recognise a Rhodanese domain in the interval 14 to 137 (LLADTPLIDV…LRQTAIQATW (124 aa)). The S-selanylcysteine intermediate role is filled by cysteine 97.

The protein belongs to the SelU family. Monomer.

The enzyme catalyses 5-methylaminomethyl-2-thiouridine(34) in tRNA + selenophosphate + (2E)-geranyl diphosphate + H2O + H(+) = 5-methylaminomethyl-2-selenouridine(34) in tRNA + (2E)-thiogeraniol + phosphate + diphosphate. It catalyses the reaction 5-methylaminomethyl-2-thiouridine(34) in tRNA + (2E)-geranyl diphosphate = 5-methylaminomethyl-S-(2E)-geranyl-thiouridine(34) in tRNA + diphosphate. It carries out the reaction 5-methylaminomethyl-S-(2E)-geranyl-thiouridine(34) in tRNA + selenophosphate + H(+) = 5-methylaminomethyl-2-(Se-phospho)selenouridine(34) in tRNA + (2E)-thiogeraniol. The catalysed reaction is 5-methylaminomethyl-2-(Se-phospho)selenouridine(34) in tRNA + H2O = 5-methylaminomethyl-2-selenouridine(34) in tRNA + phosphate. Involved in the post-transcriptional modification of the uridine at the wobble position (U34) of tRNA(Lys), tRNA(Glu) and tRNA(Gln). Catalyzes the conversion of 2-thiouridine (S2U-RNA) to 2-selenouridine (Se2U-RNA). Acts in a two-step process involving geranylation of 2-thiouridine (S2U) to S-geranyl-2-thiouridine (geS2U) and subsequent selenation of the latter derivative to 2-selenouridine (Se2U) in the tRNA chain. This is tRNA 2-selenouridine synthase from Salmonella agona (strain SL483).